We begin with the raw amino-acid sequence, 74 residues long: Kappa-scoloptoxin(07)-Ssm2c (74 aa).

A signal peptide spans 1-19 (MLVFYAPLFVSIFSNTVMG). The propeptide occupies 20 to 41 (ATIDKPIPKPILREAIEKIAVN).

This sequence belongs to the scoloptoxin-07 family. Contains 3 disulfide bonds. As to expression, expressed by the venom gland.

It localises to the secreted. Functionally, inhibits voltage-gated potassium channels. This Scolopendra mutilans (Chinese red-headed centipede) protein is Kappa-scoloptoxin(07)-Ssm2c.